We begin with the raw amino-acid sequence, 339 residues long: Lipoate-protein ligase A (339 aa).

Residues aspartate 29 to alanine 216 form the BPL/LPL catalytic domain. ATP is bound by residues arginine 71, glycine 76 to phenylalanine 79, and lysine 134. Lysine 134 contacts (R)-lipoate.

The protein belongs to the LplA family. In terms of assembly, monomer.

It localises to the cytoplasm. It carries out the reaction L-lysyl-[lipoyl-carrier protein] + (R)-lipoate + ATP = N(6)-[(R)-lipoyl]-L-lysyl-[lipoyl-carrier protein] + AMP + diphosphate + H(+). It participates in protein modification; protein lipoylation via exogenous pathway; protein N(6)-(lipoyl)lysine from lipoate: step 1/2. It functions in the pathway protein modification; protein lipoylation via exogenous pathway; protein N(6)-(lipoyl)lysine from lipoate: step 2/2. Its function is as follows. Catalyzes both the ATP-dependent activation of exogenously supplied lipoate to lipoyl-AMP and the transfer of the activated lipoyl onto the lipoyl domains of lipoate-dependent enzymes. This chain is Lipoate-protein ligase A, found in Bdellovibrio bacteriovorus (strain ATCC 15356 / DSM 50701 / NCIMB 9529 / HD100).